The primary structure comprises 119 residues: Large ribosomal subunit protein uL18 (119 aa).

Belongs to the universal ribosomal protein uL18 family. Part of the 50S ribosomal subunit; part of the 5S rRNA/L5/L18/L25 subcomplex. Contacts the 5S and 23S rRNAs.

Functionally, this is one of the proteins that bind and probably mediate the attachment of the 5S RNA into the large ribosomal subunit, where it forms part of the central protuberance. This chain is Large ribosomal subunit protein uL18, found in Roseobacter denitrificans (strain ATCC 33942 / OCh 114) (Erythrobacter sp. (strain OCh 114)).